A 539-amino-acid polypeptide reads, in one-letter code: Sorting nexin-27 (539 aa).

The tract at residues 1–40 (MADEDGEGIHPSAPHRNGGGGGGSGLHCAGNGGGGGGGPR) is disordered. Gly residues predominate over residues 17–39 (NGGGGGGSGLHCAGNGGGGGGGP). One can recognise a PDZ domain in the interval 41 to 134 (VVRIVKSESG…ELILTVLSVP (94 aa)). Phosphoserine is present on residues serine 49 and serine 60. The PX domain occupies 159-267 (QAVPISVPTY…EFLSESDENY (109 aa)). The Ras-associating domain maps to 271–360 (SDVELRVALP…TCLTIRKWLF (90 aa)). The interval 271–360 (SDVELRVALP…TCLTIRKWLF (90 aa)) is FERM-like region F1. Residues 371–419 (NDLAVTYFFHQAVDDVKKGYIKAEEKSYQLQKLHEQRKMVMYLNMLRTC) are FERM-like region F2. The interval 423-523 (NEIIFPHCAC…RVFCELKWRK (101 aa)) is FERM-like region F3.

As to quaternary structure, core component of the SNX27-retromer, a multiprotein complex composed of SNX27, the WASH complex and the retromer complex. Interacts (via the FERM-like regions) with the WASH complex. Interacts with SNX1. Interacts with CYTIP. Interacts with DGKZ. Interacts with MCC. Interacts (via PDZ domain) with a number of target transmembrane proteins (via PDZ-binding motif): ABCC4, ADRB2, ARHGEF7, GRIA1, GRIA2, GRIN1, GRIN2A GRIN2C, KCNJ6, KCNJ9 and SLC2A1/GLUT1. Interacts (via PDZ domains) with SLC9A3; directs SLC9A3 membrane insertion from early endosomes to the plasma membrane. Expressed in cells of hematopoietic origin.

It is found in the early endosome membrane. The protein resides in the cytoplasm. Its subcellular location is the cytosol. Functionally, involved in the retrograde transport from endosome to plasma membrane, a trafficking pathway that promotes the recycling of internalized transmembrane proteins. Following internalization, endocytosed transmembrane proteins are delivered to early endosomes and recycled to the plasma membrane instead of being degraded in lysosomes. SNX27 specifically binds and directs sorting of a subset of transmembrane proteins containing a PDZ-binding motif at the C-terminus: following interaction with target transmembrane proteins, associates with the retromer complex, preventing entry into the lysosomal pathway, and promotes retromer-tubule based plasma membrane recycling. SNX27 also binds with the WASH complex. Interacts with membranes containing phosphatidylinositol-3-phosphate (PtdIns(3P)). May participate in establishment of natural killer cell polarity. Recruits CYTIP to early endosomes. This chain is Sorting nexin-27 (Snx27), found in Mus musculus (Mouse).